Consider the following 534-residue polypeptide: MKSNVDTVLDGYTSVPVGVLDSTLANTDILTRITLVFPSSLSLSALQESWYALVRSWPILAARVRATPSTPSGLSYLIPTPATLESLETRSRNSASKPLEKHIVLLDQSSRSFSDYHPIVAKAVHSNLDRNNISIGGAPLVEHEKATICSNACTSWKQLIKQDQAFVTAQATKFADATTVTISFSHILGDAFTIKHIFQGWQTALNGQAVQELQDVGKDPFIKYLPKDTNDKKHKKNKKSEPAPDLPLQWFRYGLARKIKLISLLLWEVKVKKPEKTLGQYYIYLPQAKVDELMAQARSDLEQLRSSSATSATERDLNVSTFNVLFAWLLQNIHASTAIKPSKTSSVICIINAKTRPPAGHVPADYPRHQLWGGALGAPLRPLSAAEYVTLPLGQLALHIRESITEQVDPENIRKSVVMALKHSMWKKPSGELLFFSQNPNTYWCGCTEWRSAKFHTIDFSAAATPHHDAIQPTAAPAASVNPVAITTNMETPMTKRNRWALLGEANNGIWFTGGLTANEASNKNGFGRYIFVE.

Catalysis depends on proton acceptor residues His-186 and Asp-459.

Belongs to the plant acyltransferase family.

Its subcellular location is the cell membrane. The protein operates within secondary metabolite biosynthesis. In terms of biological role, acetyltransferase; part of the gene cluster that mediates the biosynthesis of mannosylerythritol lipids (MELs), surface-active substances that enhance the availability of water-insoluble substrates. Mannosylerythritol lipid production is responsible for hemolytic activity of Ustilago maydis. Depending on the number of acetyl groups, mannosylerythritol lipids can be differentiated into MEL A (fully acetylated), MEL B and MEL C (monoacetylated at R-6 and R-4, respectively), and the fully deacetylated MEL D. The first step in the pathway is the generation of mannosylerythritol by the glycosyltransferase EMT1 which catalyzes the transfer of GDP-mannose to the C-4 atom of meso-erythritol. This reaction has to be stereospecific, since only mannosyl-D-erythritol is generated. The produced disaccharide is subsequently acylated with fatty acids of various lengths derived from the peroxisomal beta-oxidation by the peroxisomal acyltransferases MAC1 and MAC2 at positions C-2 and C-3, repectively. The existence of MEL derivatives which carry an acetyl group at C-2 implies that at least MAC1 also accepts acetyl-CoA as a donor. The final step of MEL biosynthesis is the acetylation of the fully acylated mannosylerythritol lipids catalyzed by the acetyl-CoA-dependent acetyltransferase MAT1. MAT1 displays a relaxed regioselectivity and is able to transfer acetylgroups to both positions C-4 and C-6 of the mannosyl moiety. This is Acetyltransferase MATC1 from Mycosarcoma maydis (Corn smut fungus).